Consider the following 304-residue polypeptide: ATP phosphoribosyltransferase (304 aa).

Belongs to the ATP phosphoribosyltransferase family.

It is found in the cytoplasm. The catalysed reaction is 1-(5-phospho-beta-D-ribosyl)-ATP + diphosphate = 5-phospho-alpha-D-ribose 1-diphosphate + ATP. It functions in the pathway amino-acid biosynthesis; L-histidine biosynthesis; L-histidine from 5-phospho-alpha-D-ribose 1-diphosphate: step 1/9. Catalyzes the condensation of ATP and 5-phosphoribose 1-diphosphate to form N'-(5'-phosphoribosyl)-ATP (PR-ATP). Has a crucial role in the pathway because the rate of histidine biosynthesis seems to be controlled primarily by regulation of the enzymatic activity. The polypeptide is ATP phosphoribosyltransferase (HIS1) (Debaryomyces hansenii (strain ATCC 36239 / CBS 767 / BCRC 21394 / JCM 1990 / NBRC 0083 / IGC 2968) (Yeast)).